The sequence spans 270 residues: 4-hydroxy-tetrahydrodipicolinate reductase (270 aa).

NAD(+)-binding positions include 11 to 16 and Glu37; that span reads GASGRM. Arg38 provides a ligand contact to NADP(+). NAD(+) is bound by residues 101-103 and 125-128; these read GTT and APNM. His158 functions as the Proton donor/acceptor in the catalytic mechanism. His159 provides a ligand contact to (S)-2,3,4,5-tetrahydrodipicolinate. Lys162 serves as the catalytic Proton donor. 168–169 is a (S)-2,3,4,5-tetrahydrodipicolinate binding site; that stretch reads GT.

Belongs to the DapB family.

It is found in the cytoplasm. It catalyses the reaction (S)-2,3,4,5-tetrahydrodipicolinate + NAD(+) + H2O = (2S,4S)-4-hydroxy-2,3,4,5-tetrahydrodipicolinate + NADH + H(+). The catalysed reaction is (S)-2,3,4,5-tetrahydrodipicolinate + NADP(+) + H2O = (2S,4S)-4-hydroxy-2,3,4,5-tetrahydrodipicolinate + NADPH + H(+). It participates in amino-acid biosynthesis; L-lysine biosynthesis via DAP pathway; (S)-tetrahydrodipicolinate from L-aspartate: step 4/4. Functionally, catalyzes the conversion of 4-hydroxy-tetrahydrodipicolinate (HTPA) to tetrahydrodipicolinate. In Shewanella frigidimarina (strain NCIMB 400), this protein is 4-hydroxy-tetrahydrodipicolinate reductase.